Here is a 411-residue protein sequence, read N- to C-terminus: Inhibin beta B chain (411 aa).

A signal peptide spans 1–28 (MDGLPGRALGAACLLLLVAGWLGPEAWG). The tract at residues 28–69 (GSPTPPPSPAAPPPPPPPGAPGGSQDTCTSCGGGGGGFRRPE) is disordered. A propeptide spanning residues 29–296 (SPTPPPSPAA…GDSRHRIRKR (268 aa)) is cleaved from the precursor. A compositionally biased stretch (pro residues) spans 30-47 (PTPPPSPAAPPPPPPPGA). N97 carries N-linked (GlcNAc...) asparagine glycosylation. 4 disulfide bridges follow: C300-C308, C307-C376, C336-C408, and C340-C410.

It belongs to the TGF-beta family. Dimeric, linked by one or more disulfide bonds. Inhibin B is a dimer of alpha and beta-B. Activin B is a homodimer of beta-B. Activin AB is a dimer of beta-A and beta-B. Interacts with FST and FSTL3. Activin B interacts with BMPR2. As to expression, uterus, testis, ovary, lung, kidney, brain, CJ7 embryonic stem cells, and possibly in liver.

The protein resides in the secreted. In terms of biological role, inhibins and activins inhibit and activate, respectively, the secretion of follitropin by the pituitary gland. Inhibins/activins are involved in regulating a number of diverse functions such as hypothalamic and pituitary hormone secretion, gonadal hormone secretion, germ cell development and maturation, erythroid differentiation, insulin secretion, nerve cell survival, embryonic axial development or bone growth, depending on their subunit composition. Inhibins appear to oppose the functions of activins. Functionally, activin B is a dimer of alpha and beta-B that plays a role in several essential biological processes including embryonic development, stem cell maintenance and differentiation, haematopoiesis, cell proliferation and wound healing. Signals through type I receptor ACVR1C, abundantly expressed in pancreatic beta cells, and type II receptors like ACVR2A. Upon ligand binding, these receptors phosphorylate intracellular signaling mediators SMAD2 and SMAD3, which form a complex with SMAD4, translocate to the nucleus, and regulate gene expression. Plays a crucial role in the induction of hepcidin by inflammation through activation of ACVR1C and subsequent phosphorylation of SMAD1/5/8. Regulates adipocyte lipid metabolism by decreasing non-esterified fatty acids and glycerol release and increases intracellular triglyceride content. Stimulates wound healing by promoting cell migration and hair follicle regeneration through the JNK and ERK signaling pathways downstream of RHOA. Its function is as follows. Inhibin B is a dimer of alpha and beta-B that plays a crucial role in the regulation of the reproductive system by inhibiting the secretion of follicle-stimulating hormone (FSH) from the anterior pituitary gland. Thereby, maintains reproductive homeostasis in both males and females. Acts as a more potent suppressor of FSH release than inhibin A. Functions as competitive receptor antagonist binding activin type II receptors with high affinity in the presence of the TGF-beta type III coreceptor/TGFBR3L. This chain is Inhibin beta B chain (Inhbb), found in Mus musculus (Mouse).